A 113-amino-acid chain; its full sequence is U-scoloptoxin(16)-Sa1a (113 aa).

The signal sequence occupies residues 1-29; the sequence is MAPPSNPLFVVLCWALFAYLMLVLRDIQA.

This sequence belongs to the scoloptoxin-16 family. In terms of processing, contains 4 disulfide bonds. Expressed by the venom gland.

It localises to the secreted. The polypeptide is U-scoloptoxin(16)-Sa1a (Scolopendra alternans (Florida Keys giant centipede)).